Consider the following 446-residue polypeptide: Signal recognition particle protein (446 aa).

GTP is bound by residues 106 to 113 (GLQGSGKT), 188 to 192 (DTAGR), and 246 to 249 (SKLD).

This sequence belongs to the GTP-binding SRP family. SRP54 subfamily. Part of the signal recognition particle protein translocation system, which is composed of SRP and FtsY.

It is found in the cytoplasm. It catalyses the reaction GTP + H2O = GDP + phosphate + H(+). Involved in targeting and insertion of nascent membrane proteins into the cytoplasmic membrane. Binds to the hydrophobic signal sequence of the ribosome-nascent chain (RNC) as it emerges from the ribosomes. The SRP-RNC complex is then targeted to the cytoplasmic membrane where it interacts with the SRP receptor FtsY. In Mycoplasma genitalium (strain ATCC 33530 / DSM 19775 / NCTC 10195 / G37) (Mycoplasmoides genitalium), this protein is Signal recognition particle protein.